The primary structure comprises 364 residues: Dual-specificity RNA methyltransferase RlmN (364 aa).

The active-site Proton acceptor is the Glu-91. In terms of domain architecture, Radical SAM core spans 102–337; sequence GTLRITQCLS…AIIRKSKGQD (236 aa). An intrachain disulfide couples Cys-109 to Cys-342. The [4Fe-4S] cluster site is built by Cys-116, Cys-120, and Cys-123. S-adenosyl-L-methionine is bound by residues 169–170, Ser-201, 223–225, and Asn-299; these read GE and SLH. Cys-342 acts as the S-methylcysteine intermediate in catalysis.

Belongs to the radical SAM superfamily. RlmN family. It depends on [4Fe-4S] cluster as a cofactor.

It is found in the cytoplasm. The enzyme catalyses adenosine(2503) in 23S rRNA + 2 reduced [2Fe-2S]-[ferredoxin] + 2 S-adenosyl-L-methionine = 2-methyladenosine(2503) in 23S rRNA + 5'-deoxyadenosine + L-methionine + 2 oxidized [2Fe-2S]-[ferredoxin] + S-adenosyl-L-homocysteine. It catalyses the reaction adenosine(37) in tRNA + 2 reduced [2Fe-2S]-[ferredoxin] + 2 S-adenosyl-L-methionine = 2-methyladenosine(37) in tRNA + 5'-deoxyadenosine + L-methionine + 2 oxidized [2Fe-2S]-[ferredoxin] + S-adenosyl-L-homocysteine. In terms of biological role, specifically methylates position 2 of adenine 2503 in 23S rRNA and position 2 of adenine 37 in tRNAs. m2A2503 modification seems to play a crucial role in the proofreading step occurring at the peptidyl transferase center and thus would serve to optimize ribosomal fidelity. The polypeptide is Dual-specificity RNA methyltransferase RlmN (Nitratidesulfovibrio vulgaris (strain DP4) (Desulfovibrio vulgaris)).